The sequence spans 78 residues: Conotoxin TsMSGL-11 (78 aa).

The N-terminal stretch at M1 to A24 is a signal peptide. Residues G25–T44 constitute a propeptide that is removed on maturation. 3 cysteine pairs are disulfide-bonded: C51-C63, C55-C72, and C62-C76. F77 is subject to Phenylalanine amide.

Belongs to the conotoxin O3 superfamily. As to expression, expressed by the venom duct.

Its subcellular location is the secreted. In Conus tessulatus (Tessellate cone), this protein is Conotoxin TsMSGL-11.